The following is a 193-amino-acid chain: NAD(P)H-quinone oxidoreductase subunit J (193 aa).

Positions Met1–Ser21 are disordered.

This sequence belongs to the complex I 30 kDa subunit family. As to quaternary structure, NDH-1 can be composed of about 15 different subunits; different subcomplexes with different compositions have been identified which probably have different functions.

The protein localises to the cellular thylakoid membrane. It catalyses the reaction a plastoquinone + NADH + (n+1) H(+)(in) = a plastoquinol + NAD(+) + n H(+)(out). The enzyme catalyses a plastoquinone + NADPH + (n+1) H(+)(in) = a plastoquinol + NADP(+) + n H(+)(out). In terms of biological role, NDH-1 shuttles electrons from an unknown electron donor, via FMN and iron-sulfur (Fe-S) centers, to quinones in the respiratory and/or the photosynthetic chain. The immediate electron acceptor for the enzyme in this species is believed to be plastoquinone. Couples the redox reaction to proton translocation, and thus conserves the redox energy in a proton gradient. Cyanobacterial NDH-1 also plays a role in inorganic carbon-concentration. The protein is NAD(P)H-quinone oxidoreductase subunit J of Synechococcus sp. (strain CC9902).